The sequence spans 111 residues: Transcription factor S (111 aa).

Zn(2+) contacts are provided by Cys4, Cys7, Cys24, Cys27, Cys72, Cys75, Cys100, and Cys103. A C4-type zinc finger spans residues 4 to 27 (CPKCGSMMMPRKENGKTVYKCSKC). The TFIIS-type zinc-finger motif lies at 68–108 (RGISCPSCGNDEAYFWILQTRSADEPATRFYKCTKCGKVWR).

Belongs to the archaeal RpoM/eukaryotic RPA12/RPB9/RPC11 RNA polymerase family.

Induces RNA cleavage activity in the RNA polymerase. In its presence, the cleavage activity of the RNA polymerase truncates the RNA back to position +15 in a stepwise manner by releasing mainly dinucleotides from the 3'-end of the nascent RNA. The truncated RNAs are able to continue elongation. Involved in transcriptional proofreading and fidelity. Misincorporation of nucleotides during elongation of transcription leads to arrested elongation complexes which are rescued by TFS-promoted removal of a dinucleotide from the 3'-end. TFS is able to induce a cleavage resynthesis cycle in stalled elongation complexes (resulting from the next missing nucleotide or a reduced incorporation rate of a wrong nucleotide) preventing misincorporation and enabling proofreading in a post-incorporation manner. Pausing of elongation complexes is the main determinant of TFS-induced RNA cleavage. The chain is Transcription factor S from Sulfolobus acidocaldarius (strain ATCC 33909 / DSM 639 / JCM 8929 / NBRC 15157 / NCIMB 11770).